The sequence spans 377 residues: Trichodiene synthase (377 aa).

Belongs to the trichodiene synthase family.

The catalysed reaction is (2E,6E)-farnesyl diphosphate = trichodiene + diphosphate. The protein operates within sesquiterpene biosynthesis; trichothecene biosynthesis. Its function is as follows. TS is a member of the terpene cyclase group of enzymes. It catalyzes the isomerization and cyclization of farnesyl pyro-phosphate to form trichodiene, the first cyclic intermediate in the biosynthetic pathway for trichothecenes. It serves to branch trichothecene biosynthesis from the isoprenoid pathway. This chain is Trichodiene synthase (TRI5), found in Fusarium poae.